The chain runs to 146 residues: Large ribosomal subunit protein uL15 (146 aa).

The disordered stretch occupies residues 1–56; that stretch reads MKLHELKAAEGANKASKRVGRGTGSGLGKTSGKGQNGQNSRSGGGVRPGFEGGQMP. 2 stretches are compositionally biased toward gly residues: residues 21-35 and 42-52; these read RGTG…GKGQ and SGGGVRPGFEG.

The protein belongs to the universal ribosomal protein uL15 family. Part of the 50S ribosomal subunit.

Binds to the 23S rRNA. This chain is Large ribosomal subunit protein uL15, found in Clostridium botulinum (strain Langeland / NCTC 10281 / Type F).